Reading from the N-terminus, the 35-residue chain is Apolipophorin-3 (35 aa).

Equilibrium between a soluble monomer and a bound lipoprotein form. Apolipophorin-3 associates with lipophorin during lipid loading until each particle contains 9 or 14 molecules of apolipophorin-3. In terms of tissue distribution, hemolymph.

The protein resides in the secreted. Assists in the loading of diacylglycerol, generated from triacylglycerol stores in the fat body through the action of adipokinetic hormone, into lipophorin, the hemolymph lipoprotein. It increases the lipid carrying capacity of lipophorin by covering the expanding hydrophobic surface resulting from diacylglycerol uptake. It thus plays a critical role in the transport of lipids during flight in several species of insects. Has hemagglutinating activity towards rabbit erythrocytes. The sequence is that of Apolipophorin-3 from Heliothis virescens (Tobacco budworm moth).